Consider the following 71-residue polypeptide: Arrestin-D (71 aa).

This sequence belongs to the arrestin family. As to expression, adrenal, cerebral cortex, heart, liver, lung, pituitary and testis.

This is Arrestin-D (Dar) from Rattus norvegicus (Rat).